The primary structure comprises 183 residues: Ribosome-recycling factor (183 aa).

The disordered stretch occupies residues 134-156 (DANDELKKHQSEMSQDEVKGHQD).

It belongs to the RRF family.

The protein localises to the cytoplasm. Responsible for the release of ribosomes from messenger RNA at the termination of protein biosynthesis. May increase the efficiency of translation by recycling ribosomes from one round of translation to another. The polypeptide is Ribosome-recycling factor (Leptospira biflexa serovar Patoc (strain Patoc 1 / Ames)).